Here is a 115-residue protein sequence, read N- to C-terminus: NADH-ubiquinone oxidoreductase chain 3 (115 aa).

Helical transmembrane passes span 4-24 (LTAL…AFWL), 55-75 (FFLV…LLPL), and 86-106 (VMML…AYEW).

Belongs to the complex I subunit 3 family. In terms of assembly, core subunit of respiratory chain NADH dehydrogenase (Complex I) which is composed of 45 different subunits. Interacts with TMEM186. Interacts with TMEM242.

It is found in the mitochondrion inner membrane. The enzyme catalyses a ubiquinone + NADH + 5 H(+)(in) = a ubiquinol + NAD(+) + 4 H(+)(out). Core subunit of the mitochondrial membrane respiratory chain NADH dehydrogenase (Complex I) which catalyzes electron transfer from NADH through the respiratory chain, using ubiquinone as an electron acceptor. Essential for the catalytic activity of complex I. This Isthmomys pirrensis (Mount Pirri Isthmus rat) protein is NADH-ubiquinone oxidoreductase chain 3.